A 2476-amino-acid chain; its full sequence is Non-reducing polyketide synthase ausA (2476 aa).

The interval 14–253 (VLFGPKYPEV…HHSNHTQAVE (240 aa)) is N-terminal acylcarrier protein transacylase domain (SAT). The Ketosynthase family 3 (KS3) domain occupies 379 to 795 (AVPIAVTGMA…GSNAAIVLRE (417 aa)). Active-site for beta-ketoacyl synthase activity residues include cysteine 544, histidine 679, and histidine 718. Residues 906–1210 (ICFGGQTGDT…LPTDLSGAQA (305 aa)) are malonyl-CoA:ACP transacylase (MAT) domain. The active-site For acyl/malonyl transferase activity is serine 993. An N-terminal hotdog fold region spans residues 1277 to 1405 (QEASLVRLLR…GRVSLQAAGS (129 aa)). Residues 1277–1584 (QEASLVRLLR…FTGVSIQSLK (308 aa)) form the PKS/mFAS DH domain. Residues 1280–1583 (SLVRLLRQDG…TFTGVSIQSL (304 aa)) form a product template (PT) domain region. The Proton acceptor; for dehydratase activity role is filled by histidine 1310. The interval 1433–1584 (SSSGLKRSTV…FTGVSIQSLK (152 aa)) is C-terminal hotdog fold. Aspartate 1491 acts as the Proton donor; for dehydratase activity in catalysis. A Carrier domain is found at 1626 to 1700 (DGDLLAVQTM…GLVQRIFPGH (75 aa)). The residue at position 1660 (serine 1660) is an O-(pantetheine 4'-phosphoryl)serine. A methyltransferase (CMeT) domain region spans residues 1862-2095 (QHASEHKLLH…GFNWVDWTDN (234 aa)). Residues 2128–2476 (NTVQEQTVLY…YEFLRRHVGL (349 aa)) are thioesterase (TE) domain. Active-site for thioesterase activity residues include serine 2251, aspartate 2413, and histidine 2445.

The enzyme catalyses 3 malonyl-CoA + acetyl-CoA + 2 S-adenosyl-L-methionine = 3,5-dimethylorsellinate + 2 S-adenosyl-L-homocysteine + 3 CO2 + 4 CoA. It functions in the pathway secondary metabolite biosynthesis; terpenoid biosynthesis. Its function is as follows. Non-reducing polyketide synthase; part of the gene cluster A that mediates the biosynthesis of austinol and dehydroaustinol, two fungal meroterpenoids. The first step of the pathway is the synthesis of 3,5-dimethylorsellinic acid by the polyketide synthase ausA. 3,5-dimethylorsellinic acid is then prenylated by the polyprenyl transferase ausN. Further epoxidation by the FAD-dependent monooxygenase ausM and cyclization by the probable terpene cyclase ausL lead to the formation of protoaustinoid A. Protoaustinoid A is then oxidized to spiro-lactone preaustinoid A3 by the combined action of the FAD-binding monooxygenases ausB and ausC, and the dioxygenase ausE. Acid-catalyzed keto-rearrangement and ring contraction of the tetraketide portion of preaustinoid A3 by ausJ lead to the formation of preaustinoid A4. The aldo-keto reductase ausK, with the help of ausH, is involved in the next step by transforming preaustinoid A4 into isoaustinone which is in turn hydroxylated by the P450 monooxygenase ausI to form austinolide. Finally, the cytochrome P450 monooxygenase ausG modifies austinolide to austinol. Austinol can be further modified to dehydroaustinol which forms a diffusible complex with diorcinol that initiates conidiation. Due to genetic rearrangements of the clusters and the subsequent loss of some enzymes, the end products of the Emericella nidulans austinoid biosynthesis clusters are austinol and dehydroaustinol, even if additional enzymes, such as the O-acetyltransferase ausQ and the cytochrome P450 monooxygenase ausR are still functional. This chain is Non-reducing polyketide synthase ausA, found in Emericella nidulans (strain FGSC A4 / ATCC 38163 / CBS 112.46 / NRRL 194 / M139) (Aspergillus nidulans).